We begin with the raw amino-acid sequence, 240 residues long: MAANIIATRATPKMASKKEHQYCLLDSQEKRDGHYPFSFELKPYGQTGANIIGVQGSLTHVIKMTVFPFMIPFPLQKIHIDDFIGGRVYLFFKELDVQAISDVNGMQYHFEFKVVPVSSNQVELLPVNNKYKFTYAIPEVQYLTPIFYDLSGPLNFPLDTLSVHVDSLTKHIQLPIQNHNLTTGDRVFISGYKHLQTIELCKNNKIFIKCIPPLSSEKIKLYIPKNRIRIPLYFKSLKNV.

Belongs to the asfivirus H240R family.

The protein localises to the virion. Forms the penton at the fivefold vertices of the icosahedral capsid. Together with the minor capsid proteins (p17, p49, and M1249L), forms a complicated network immediately below the outer capsid shell, stabilizing the whole capsid. This African swine fever virus (isolate Tick/South Africa/Pretoriuskop Pr4/1996) (ASFV) protein is Penton protein H240R.